We begin with the raw amino-acid sequence, 228 residues long: uncharacterized protein (228 aa).

Positions 1 to 23 are cleaved as a signal peptide; that stretch reads MIRHTRLLLASLCLIATGARASA.

This is an uncharacterized protein from Methylorubrum extorquens (strain ATCC 14718 / DSM 1338 / JCM 2805 / NCIMB 9133 / AM1) (Methylobacterium extorquens).